We begin with the raw amino-acid sequence, 379 residues long: UDP-N-acetylglucosamine--N-acetylmuramyl-(pentapeptide) pyrophosphoryl-undecaprenol N-acetylglucosamine transferase (379 aa).

UDP-N-acetyl-alpha-D-glucosamine contacts are provided by residues 10–12 (TGG), Asn-124, and Arg-165. The disordered stretch occupies residues 174 to 195 (TRDQGPGIRDQEKHMTDSTGPA). The UDP-N-acetyl-alpha-D-glucosamine site is built by Ser-211, Ile-266, and Gln-311.

The protein belongs to the glycosyltransferase 28 family. MurG subfamily.

Its subcellular location is the cell inner membrane. It catalyses the reaction di-trans,octa-cis-undecaprenyl diphospho-N-acetyl-alpha-D-muramoyl-L-alanyl-D-glutamyl-meso-2,6-diaminopimeloyl-D-alanyl-D-alanine + UDP-N-acetyl-alpha-D-glucosamine = di-trans,octa-cis-undecaprenyl diphospho-[N-acetyl-alpha-D-glucosaminyl-(1-&gt;4)]-N-acetyl-alpha-D-muramoyl-L-alanyl-D-glutamyl-meso-2,6-diaminopimeloyl-D-alanyl-D-alanine + UDP + H(+). It participates in cell wall biogenesis; peptidoglycan biosynthesis. In terms of biological role, cell wall formation. Catalyzes the transfer of a GlcNAc subunit on undecaprenyl-pyrophosphoryl-MurNAc-pentapeptide (lipid intermediate I) to form undecaprenyl-pyrophosphoryl-MurNAc-(pentapeptide)GlcNAc (lipid intermediate II). This chain is UDP-N-acetylglucosamine--N-acetylmuramyl-(pentapeptide) pyrophosphoryl-undecaprenol N-acetylglucosamine transferase, found in Pelobacter propionicus (strain DSM 2379 / NBRC 103807 / OttBd1).